Here is a 290-residue protein sequence, read N- to C-terminus: RIO-type serine/threonine-protein kinase Rio1 (290 aa).

Residues 1 to 22 (MTDEFGMVEPQEGEAFGDEWEE) form a disordered region. The span at 11-22 (QEGEAFGDEWEE) shows a compositional bias: acidic residues. A Protein kinase domain is found at 79-290 (DAFGGPISTG…DEGEDGDGDE (212 aa)). ATP is bound by residues 85–93 (ISTGKEANV), Lys-107, Glu-175, and Val-177. The active-site Proton acceptor is Asp-218. Positions 223 and 235 each coordinate Mg(2+). The active-site 4-aspartylphosphate intermediate is the Asp-235.

It belongs to the protein kinase superfamily. RIO-type Ser/Thr kinase family. Mg(2+) serves as cofactor. Mn(2+) is required as a cofactor. Autophosphorylated.

The enzyme catalyses L-seryl-[protein] + ATP = O-phospho-L-seryl-[protein] + ADP + H(+). It carries out the reaction L-threonyl-[protein] + ATP = O-phospho-L-threonyl-[protein] + ADP + H(+). The catalysed reaction is ATP + H2O = ADP + phosphate + H(+). Serine/threonine-protein kinase that is able to autophosphorylate as well as to phosphorylate proteasome subunit alpha 1 (PsmA1) in vitro. Despite the protein kinase domain is proposed to act predominantly as an ATPase. The protein is RIO-type serine/threonine-protein kinase Rio1 (rio1) of Haloferax volcanii (strain ATCC 29605 / DSM 3757 / JCM 8879 / NBRC 14742 / NCIMB 2012 / VKM B-1768 / DS2) (Halobacterium volcanii).